Reading from the N-terminus, the 218-residue chain is Large ribosomal subunit protein uL3 (218 aa).

It belongs to the universal ribosomal protein uL3 family. As to quaternary structure, part of the 50S ribosomal subunit. Forms a cluster with proteins L14 and L19.

One of the primary rRNA binding proteins, it binds directly near the 3'-end of the 23S rRNA, where it nucleates assembly of the 50S subunit. The sequence is that of Large ribosomal subunit protein uL3 from Corynebacterium efficiens (strain DSM 44549 / YS-314 / AJ 12310 / JCM 11189 / NBRC 100395).